The following is a 403-amino-acid chain: Dual-specificity RNA methyltransferase RlmN (403 aa).

The disordered stretch occupies residues 1-25; sequence MTKIPMQPADSTPATFHPNAPTKTN. The active-site Proton acceptor is glutamate 112. The Radical SAM core domain occupies 123-364; that stretch reads VNGRKTLCIS…VCTIRQTRGD (242 aa). Cysteine 130 and cysteine 370 are joined by a disulfide. Positions 137, 141, and 144 each coordinate [4Fe-4S] cluster. S-adenosyl-L-methionine contacts are provided by residues 193-194, serine 225, 247-249, and asparagine 327; these read GE and SLH. The active-site S-methylcysteine intermediate is cysteine 370.

It belongs to the radical SAM superfamily. RlmN family. [4Fe-4S] cluster is required as a cofactor.

It localises to the cytoplasm. The enzyme catalyses adenosine(2503) in 23S rRNA + 2 reduced [2Fe-2S]-[ferredoxin] + 2 S-adenosyl-L-methionine = 2-methyladenosine(2503) in 23S rRNA + 5'-deoxyadenosine + L-methionine + 2 oxidized [2Fe-2S]-[ferredoxin] + S-adenosyl-L-homocysteine. The catalysed reaction is adenosine(37) in tRNA + 2 reduced [2Fe-2S]-[ferredoxin] + 2 S-adenosyl-L-methionine = 2-methyladenosine(37) in tRNA + 5'-deoxyadenosine + L-methionine + 2 oxidized [2Fe-2S]-[ferredoxin] + S-adenosyl-L-homocysteine. Functionally, specifically methylates position 2 of adenine 2503 in 23S rRNA and position 2 of adenine 37 in tRNAs. m2A2503 modification seems to play a crucial role in the proofreading step occurring at the peptidyl transferase center and thus would serve to optimize ribosomal fidelity. The polypeptide is Dual-specificity RNA methyltransferase RlmN (Psychrobacter sp. (strain PRwf-1)).